Reading from the N-terminus, the 672-residue chain is Inner kinetochore subunit mis6 (672 aa).

The protein belongs to the CENP-I/CTF3 family. In terms of assembly, component of the inner kinetochore constitutive centromere-associated network (CCAN) (also known as central kinetochore Sim4 complex in fission yeast), which is composed of at least cnl2, cnp3, cnp20, fta1, fta2, fta3, fta4, fta6, fta7, mal2, mhf1, mhf2, mis6, mis15, mis17, sim4 and wip1. Interacts with cnp1, sim4, mis15 and mis17.

It is found in the nucleus. It localises to the chromosome. The protein localises to the centromere. Functionally, component of the kinetochore, a multiprotein complex that assembles on centromeric DNA and attaches chromosomes to spindle microtubules, mediating chromosome segregation and sister chromatid segregation during meiosis and mitosis. Component of the inner kinetochore constitutive centromere-associated network (CCAN), which serves as a structural platform for outer kinetochore assembly. Required for the localization of cnp1 to the centromere. This chain is Inner kinetochore subunit mis6 (mis6), found in Schizosaccharomyces pombe (strain 972 / ATCC 24843) (Fission yeast).